Reading from the N-terminus, the 292-residue chain is UDP-3-O-acyl-N-acetylglucosamine deacetylase (292 aa).

Zn(2+) is bound by residues H76, H232, and D236. Residue H259 is the Proton donor of the active site.

Belongs to the LpxC family. It depends on Zn(2+) as a cofactor.

The enzyme catalyses a UDP-3-O-[(3R)-3-hydroxyacyl]-N-acetyl-alpha-D-glucosamine + H2O = a UDP-3-O-[(3R)-3-hydroxyacyl]-alpha-D-glucosamine + acetate. Its pathway is glycolipid biosynthesis; lipid IV(A) biosynthesis; lipid IV(A) from (3R)-3-hydroxytetradecanoyl-[acyl-carrier-protein] and UDP-N-acetyl-alpha-D-glucosamine: step 2/6. Its function is as follows. Catalyzes the hydrolysis of UDP-3-O-myristoyl-N-acetylglucosamine to form UDP-3-O-myristoylglucosamine and acetate, the committed step in lipid A biosynthesis. The polypeptide is UDP-3-O-acyl-N-acetylglucosamine deacetylase (Thermodesulfovibrio yellowstonii (strain ATCC 51303 / DSM 11347 / YP87)).